Here is a 296-residue protein sequence, read N- to C-terminus: 2-dehydropantoate 2-reductase (296 aa).

Residues 7 to 12 (GPGAVG), Asn-94, and Ala-120 each bind NADP(+). Asn-94 contributes to the substrate binding site. Lys-175 serves as the catalytic Proton donor. Residues Asn-179, Asn-183, Asn-193, and Ser-245 each contribute to the substrate site. NADP(+) is bound at residue Glu-257.

It belongs to the ketopantoate reductase family.

It localises to the cytoplasm. The enzyme catalyses (R)-pantoate + NADP(+) = 2-dehydropantoate + NADPH + H(+). The protein operates within cofactor biosynthesis; (R)-pantothenate biosynthesis; (R)-pantoate from 3-methyl-2-oxobutanoate: step 2/2. Catalyzes the NADPH-dependent reduction of ketopantoate into pantoic acid. This is 2-dehydropantoate 2-reductase (panE) from Vibrio cholerae serotype O1 (strain ATCC 39315 / El Tor Inaba N16961).